The chain runs to 266 residues: Ribosomal RNA small subunit methyltransferase A (266 aa).

Residues asparagine 10, isoleucine 12, glycine 37, glutamate 58, aspartate 82, and asparagine 105 each coordinate S-adenosyl-L-methionine.

This sequence belongs to the class I-like SAM-binding methyltransferase superfamily. rRNA adenine N(6)-methyltransferase family. RsmA subfamily.

The protein localises to the cytoplasm. The catalysed reaction is adenosine(1518)/adenosine(1519) in 16S rRNA + 4 S-adenosyl-L-methionine = N(6)-dimethyladenosine(1518)/N(6)-dimethyladenosine(1519) in 16S rRNA + 4 S-adenosyl-L-homocysteine + 4 H(+). Specifically dimethylates two adjacent adenosines (A1518 and A1519) in the loop of a conserved hairpin near the 3'-end of 16S rRNA in the 30S particle. May play a critical role in biogenesis of 30S subunits. In Mycoplasma capricolum subsp. capricolum (strain California kid / ATCC 27343 / NCTC 10154), this protein is Ribosomal RNA small subunit methyltransferase A.